A 349-amino-acid chain; its full sequence is Protein BCCIP homolog (349 aa).

The span at 1 to 10 (MGRVFKKKGG) shows a compositional bias: basic residues. The disordered stretch occupies residues 1-65 (MGRVFKKKGG…DDEEEDEDEQ (65 aa)). Over residues 11–33 (AKREAEEEKQEELVMRKKLRKEE) the composition is skewed to basic and acidic residues. The segment covering 34-65 (EPEPVEDVEEDEDVSDEDDEDIDDEEEDEDEQ) has biased composition (acidic residues).

Belongs to the BCP1 family.

The chain is Protein BCCIP homolog from Caenorhabditis elegans.